The following is a 390-amino-acid chain: Succinate--CoA ligase [ADP-forming] subunit beta (390 aa).

One can recognise an ATP-grasp domain in the interval Lys-9–Met-245. Residues Lys-46, Gly-53–Gly-55, Glu-99, Ser-102, and Glu-107 each bind ATP. Mg(2+) contacts are provided by Asn-200 and Asp-214. Residues Asn-265 and Gly-322–Val-324 contribute to the substrate site.

It belongs to the succinate/malate CoA ligase beta subunit family. Heterotetramer of two alpha and two beta subunits. Requires Mg(2+) as cofactor.

It catalyses the reaction succinate + ATP + CoA = succinyl-CoA + ADP + phosphate. The catalysed reaction is GTP + succinate + CoA = succinyl-CoA + GDP + phosphate. Its pathway is carbohydrate metabolism; tricarboxylic acid cycle; succinate from succinyl-CoA (ligase route): step 1/1. Its function is as follows. Succinyl-CoA synthetase functions in the citric acid cycle (TCA), coupling the hydrolysis of succinyl-CoA to the synthesis of either ATP or GTP and thus represents the only step of substrate-level phosphorylation in the TCA. The beta subunit provides nucleotide specificity of the enzyme and binds the substrate succinate, while the binding sites for coenzyme A and phosphate are found in the alpha subunit. This is Succinate--CoA ligase [ADP-forming] subunit beta from Coxiella burnetii (strain RSA 331 / Henzerling II).